Here is a 158-residue protein sequence, read N- to C-terminus: Large ribosomal subunit protein uL30 (158 aa).

This sequence belongs to the universal ribosomal protein uL30 family. In terms of assembly, part of the 50S ribosomal subunit.

This is Large ribosomal subunit protein uL30 from Saccharolobus solfataricus (strain ATCC 35092 / DSM 1617 / JCM 11322 / P2) (Sulfolobus solfataricus).